A 377-amino-acid chain; its full sequence is Succinyl-diaminopimelate desuccinylase (377 aa).

Histidine 66 serves as a coordination point for Zn(2+). Residue aspartate 68 is part of the active site. Residue aspartate 99 coordinates Zn(2+). Glutamate 133 (proton acceptor) is an active-site residue. Residues glutamate 134, glutamate 162, and histidine 348 each coordinate Zn(2+).

Belongs to the peptidase M20A family. DapE subfamily. In terms of assembly, homodimer. It depends on Zn(2+) as a cofactor. Co(2+) serves as cofactor.

It carries out the reaction N-succinyl-(2S,6S)-2,6-diaminopimelate + H2O = (2S,6S)-2,6-diaminopimelate + succinate. It participates in amino-acid biosynthesis; L-lysine biosynthesis via DAP pathway; LL-2,6-diaminopimelate from (S)-tetrahydrodipicolinate (succinylase route): step 3/3. In terms of biological role, catalyzes the hydrolysis of N-succinyl-L,L-diaminopimelic acid (SDAP), forming succinate and LL-2,6-diaminopimelate (DAP), an intermediate involved in the bacterial biosynthesis of lysine and meso-diaminopimelic acid, an essential component of bacterial cell walls. In Alcanivorax borkumensis (strain ATCC 700651 / DSM 11573 / NCIMB 13689 / SK2), this protein is Succinyl-diaminopimelate desuccinylase.